Consider the following 528-residue polypeptide: Ladinin-1 (528 aa).

A disordered region spans residues 1–404 (MSVSRKDWSA…NSETPLTRSA (404 aa)). S38, S56, S62, S72, and S76 each carry phosphoserine. The span at 88–97 (RTRKERRQRR) shows a compositional bias: basic residues. S119 bears the Phosphoserine mark. Basic and acidic residues predominate over residues 134 to 173 (KKVEALPRRRLSREQRGPWAQDEERLKNRELAEGEKRLPE). SEK repeat units lie at residues 184–186 (SEK), 190–192 (SEK), 202–204 (SEK), and 208–210 (SEK). The segment at 184–281 (SEKTPVSEKT…MQERKLVSEK (98 aa)) is 6 X SEK repeats. Composition is skewed to basic and acidic residues over residues 218–231 (SLTE…KLVP) and 267–279 (IVSE…KLVS). SEK repeat units follow at residues 269–271 (SEK) and 279–281 (SEK). The segment covering 304-316 (EQPQTTGGSQATT) has biased composition (polar residues). S328, S358, S367, S405, and S496 each carry phosphoserine. Over residues 365–377 (TPSPTLLTYSSSL) the composition is skewed to low complexity. The segment at 492–528 (KTQDSGDHGSQEVRKEASVTKRAQWGSKPSTSLDAEV) is disordered. The segment covering 495-510 (DSGDHGSQEVRKEASV) has biased composition (basic and acidic residues). Residues 518–528 (SKPSTSLDAEV) show a composition bias toward polar residues.

Expressed in kidney, lung and keratinocytes followed by liver, spleen and brain. Not expressed in testis, skeletal and heart muscle and in fibroblasts.

The protein localises to the secreted. It is found in the extracellular space. It localises to the extracellular matrix. The protein resides in the basement membrane. In terms of biological role, anchoring filament protein which is a component of the basement membrane zone. This Mus musculus (Mouse) protein is Ladinin-1 (Lad1).